The sequence spans 127 residues: Large ribosomal subunit protein eL8 (127 aa).

Belongs to the eukaryotic ribosomal protein eL8 family. Part of the 50S ribosomal subunit. Probably part of the RNase P complex.

The protein localises to the cytoplasm. Its function is as follows. Multifunctional RNA-binding protein that recognizes the K-turn motif in ribosomal RNA, the RNA component of RNase P, box H/ACA, box C/D and box C'/D' sRNAs. The polypeptide is Large ribosomal subunit protein eL8 (Picrophilus torridus (strain ATCC 700027 / DSM 9790 / JCM 10055 / NBRC 100828 / KAW 2/3)).